Reading from the N-terminus, the 90-residue chain is Neuropeptide F (90 aa).

The signal sequence occupies residues 1–27; the sequence is MTFSTSSSFSRRALVALLVCTLLIDLS. The segment at 54–90 is disordered; sequence KHAQHARPRFGKRSYLNPAGYGQDEQEDDWQDSTFTR. Residues 56–65 are compositionally biased toward basic residues; it reads AQHARPRFGK. At Phe63 the chain carries Phenylalanine amide. Residues 67 to 90 constitute a propeptide that is removed on maturation; it reads SYLNPAGYGQDEQEDDWQDSTFTR.

This sequence belongs to the NPY family. As to expression, expressed in hemolymph, brain and midgut.

The protein resides in the secreted. Its function is as follows. An integral part of the sensory system that mediates food signaling, providing the neural basis for the regulation of food response; coordinates larval foraging and social behavior changes during development. May have a hormonal role in females. This is Neuropeptide F (npf) from Aedes aegypti (Yellowfever mosquito).